Reading from the N-terminus, the 347-residue chain is UDP-3-O-acylglucosamine N-acyltransferase 1 (347 aa).

His-246 (proton acceptor) is an active-site residue.

Belongs to the transferase hexapeptide repeat family. LpxD subfamily. As to quaternary structure, homotrimer.

The enzyme catalyses a UDP-3-O-[(3R)-3-hydroxyacyl]-alpha-D-glucosamine + a (3R)-hydroxyacyl-[ACP] = a UDP-2-N,3-O-bis[(3R)-3-hydroxyacyl]-alpha-D-glucosamine + holo-[ACP] + H(+). The protein operates within bacterial outer membrane biogenesis; LPS lipid A biosynthesis. Catalyzes the N-acylation of UDP-3-O-acylglucosamine using 3-hydroxyacyl-ACP as the acyl donor. Is involved in the biosynthesis of lipid A, a phosphorylated glycolipid that anchors the lipopolysaccharide to the outer membrane of the cell. The protein is UDP-3-O-acylglucosamine N-acyltransferase 1 of Francisella tularensis subsp. holarctica (strain LVS).